The chain runs to 199 residues: Charged multivesicular body protein 1b (199 aa).

Coiled-coil stretches lie at residues 15–42 and 178–199; these read AKEL…AIQK and TSVA…RDQV. Positions 167–199 are disordered; the sequence is ELPQGQTGSVGTSVASTEQDELSQRLARLRDQV. Polar residues predominate over residues 170 to 183; sequence QGQTGSVGTSVAST. Residues 186 to 196 carry the MIT-interacting motif motif; the sequence is DELSQRLARLR.

Belongs to the SNF7 family.

It localises to the cytoplasm. The protein resides in the cytosol. The protein localises to the endosome. It is found in the late endosome membrane. Its function is as follows. Probable peripherally associated component of the endosomal sorting required for transport complex III (ESCRT-III) which is involved in multivesicular bodies (MVBs) formation and sorting of endosomal cargo proteins into MVBs. MVBs contain intraluminal vesicles (ILVs) that are generated by invagination and scission from the limiting membrane of the endosome and mostly are delivered to lysosomes enabling degradation of membrane proteins, such as stimulated growth factor receptors, lysosomal enzymes and lipids. The sequence is that of Charged multivesicular body protein 1b (chmp1b) from Xenopus tropicalis (Western clawed frog).